Consider the following 69-residue polypeptide: Dermaseptin-H3 (69 aa).

Residues 1-22 (MAFLKKSLFLVLFLGMVSLSIC) form the signal peptide. Residues 23–43 (EEEKRENEDEEKQEDDEQSEM) constitute a propeptide that is removed on maturation. Positions 24–44 (EEKRENEDEEKQEDDEQSEMK) are disordered. The segment covering 30–40 (EDEEKQEDDEQ) has biased composition (acidic residues). L66 carries the post-translational modification Leucine amide. The propeptide occupies 68-69 (EQ).

Belongs to the frog skin active peptide (FSAP) family. Dermaseptin subfamily. As to expression, expressed by the skin glands.

It localises to the secreted. Its function is as follows. Possesses a potent antimicrobial activity against Gram-positive and Gram-negative bacteria. Probably acts by disturbing membrane functions with its amphipathic structure. The chain is Dermaseptin-H3 from Pithecopus azureus (Orange-legged monkey tree frog).